A 428-amino-acid polypeptide reads, in one-letter code: Glutamate-1-semialdehyde 2,1-aminomutase (428 aa).

K265 is modified (N6-(pyridoxal phosphate)lysine).

Belongs to the class-III pyridoxal-phosphate-dependent aminotransferase family. HemL subfamily. As to quaternary structure, homodimer. Pyridoxal 5'-phosphate is required as a cofactor.

It is found in the cytoplasm. It carries out the reaction (S)-4-amino-5-oxopentanoate = 5-aminolevulinate. The protein operates within porphyrin-containing compound metabolism; protoporphyrin-IX biosynthesis; 5-aminolevulinate from L-glutamyl-tRNA(Glu): step 2/2. The polypeptide is Glutamate-1-semialdehyde 2,1-aminomutase (Aeromonas salmonicida (strain A449)).